We begin with the raw amino-acid sequence, 340 residues long: UDP-3-O-acylglucosamine N-acyltransferase (340 aa).

Residue H240 is the Proton acceptor of the active site.

This sequence belongs to the transferase hexapeptide repeat family. LpxD subfamily. In terms of assembly, homotrimer.

It catalyses the reaction a UDP-3-O-[(3R)-3-hydroxyacyl]-alpha-D-glucosamine + a (3R)-hydroxyacyl-[ACP] = a UDP-2-N,3-O-bis[(3R)-3-hydroxyacyl]-alpha-D-glucosamine + holo-[ACP] + H(+). Its pathway is bacterial outer membrane biogenesis; LPS lipid A biosynthesis. Catalyzes the N-acylation of UDP-3-O-acylglucosamine using 3-hydroxyacyl-ACP as the acyl donor. Is involved in the biosynthesis of lipid A, a phosphorylated glycolipid that anchors the lipopolysaccharide to the outer membrane of the cell. The sequence is that of UDP-3-O-acylglucosamine N-acyltransferase from Pseudoalteromonas translucida (strain TAC 125).